Reading from the N-terminus, the 70-residue chain is DNA-directed RNA polymerase subunit omega (70 aa).

This sequence belongs to the RNA polymerase subunit omega family. As to quaternary structure, the RNAP catalytic core consists of 2 alpha, 1 beta, 1 beta' and 1 omega subunit. When a sigma factor is associated with the core the holoenzyme is formed, which can initiate transcription.

It catalyses the reaction RNA(n) + a ribonucleoside 5'-triphosphate = RNA(n+1) + diphosphate. Functionally, promotes RNA polymerase assembly. Latches the N- and C-terminal regions of the beta' subunit thereby facilitating its interaction with the beta and alpha subunits. This Nitratiruptor sp. (strain SB155-2) protein is DNA-directed RNA polymerase subunit omega.